Consider the following 283-residue polypeptide: Elongation factor Ts (283 aa).

The segment at 80-83 (TDFV) is involved in Mg(2+) ion dislocation from EF-Tu.

Belongs to the EF-Ts family.

It is found in the cytoplasm. In terms of biological role, associates with the EF-Tu.GDP complex and induces the exchange of GDP to GTP. It remains bound to the aminoacyl-tRNA.EF-Tu.GTP complex up to the GTP hydrolysis stage on the ribosome. In Pectobacterium atrosepticum (strain SCRI 1043 / ATCC BAA-672) (Erwinia carotovora subsp. atroseptica), this protein is Elongation factor Ts.